Here is a 590-residue protein sequence, read N- to C-terminus: Muscarinic acetylcholine receptor M3 (590 aa).

The Extracellular segment spans residues 1–67 (MTLHNNSTTS…DPLGGHTVWQ (67 aa)). N-linked (GlcNAc...) asparagine glycosylation is found at Asn-5, Asn-6, Asn-15, Asn-41, and Asn-48. Residues 68 to 91 (VVFIAFLTGILALVTIIGNILVIV) form a helical membrane-spanning segment. Over 92–104 (SFKVNKQLKTVNN) the chain is Cytoplasmic. The helical transmembrane segment at 105–130 (YFLLSLACADLIIGVISMNLFTTYII) threads the bilayer. The Extracellular portion of the chain corresponds to 131 to 142 (MNRWALGNLACD). The cysteines at positions 141 and 221 are disulfide-linked. A helical transmembrane segment spans residues 143-164 (LWLAIDYVASNASVMNLLVISF). Topologically, residues 165 to 184 (DRYFSITRPLTYRAKRTTKR) are cytoplasmic. A helical membrane pass occupies residues 185–206 (AGVMIGLAWVISFVLWAPAILF). Topologically, residues 207–229 (WQYFVGKRTVPPGECFIQFLSEP) are extracellular. The chain crosses the membrane as a helical span at residues 230–252 (TITFGTAIAAFYMPVTIMTILYW). The Cytoplasmic portion of the chain corresponds to 253 to 491 (RIYKETEKRT…SLVKEKKAAQ (239 aa)). Residues 275–281 (AETENFV) carry the Basolateral sorting signal motif. The segment at 323–357 (SSEQMDQDHSSSDSWNNNDAAASLENSASSDEEDI) is disordered. Low complexity predominate over residues 334 to 345 (SDSWNNNDAAAS). Residue Ser-385 is modified to Phosphoserine. A helical membrane pass occupies residues 492 to 514 (TLSAILLAFIITWTPYNIMVLVN). The Extracellular portion of the chain corresponds to 515 to 526 (TFCDSCIPKTFW). A disulfide bridge connects residues Cys-517 and Cys-520. The helical transmembrane segment at 527–546 (NLGYWLCYINSTVNPVCYAL) threads the bilayer. Residues 547 to 590 (CNKTFRTTFKMLLLCQCGKKKRRKQQYQQRQSVIFHKRAPEQAL) lie on the Cytoplasmic side of the membrane.

It belongs to the G-protein coupled receptor 1 family. Muscarinic acetylcholine receptor subfamily. CHRM3 sub-subfamily. Homodimer; the dimers can form tetramers. Interacts with NALCN. Interacts with TMEM147.

It localises to the cell membrane. Its subcellular location is the postsynaptic cell membrane. The protein resides in the basolateral cell membrane. It is found in the endoplasmic reticulum membrane. The muscarinic acetylcholine receptor mediates various cellular responses, including inhibition of adenylate cyclase, breakdown of phosphoinositides and modulation of potassium channels through the action of G proteins. Primary transducing effect is Pi turnover. The sequence is that of Muscarinic acetylcholine receptor M3 (CHRM3) from Gorilla gorilla gorilla (Western lowland gorilla).